A 582-amino-acid chain; its full sequence is 15-cis-phytoene desaturase, chloroplastic/chromoplastic (582 aa).

A chloroplast and chromoplast-targeting transit peptide spans 1–110 (MPQIGLVSAV…FRSSPRPTKP (110 aa)). FAD contacts are provided by residues 140–141 (EA), Lys-148, 165–166 (HI), and Tyr-171. A substrate-binding site is contributed by Arg-306. Ile-348 and Asp-537 together coordinate FAD. Ala-545 provides a ligand contact to substrate. FAD is bound at residue Met-547.

It belongs to the carotenoid/retinoid oxidoreductase family. Homotetramer. The cofactor is FAD.

The protein localises to the plastid. The protein resides in the chloroplast. It is found in the chromoplast. It localises to the membrane. It carries out the reaction 2 a plastoquinone + 15-cis-phytoene = 9,9',15-tri-cis-zeta-carotene + 2 a plastoquinol. It participates in carotenoid biosynthesis; lycopene biosynthesis. Inhibited by the herbicides metflurazon, difunone, fluridone and diflufenican. Converts phytoene into zeta-carotene via the intermediary of phytofluene by the symmetrical introduction of two double bonds at the C-11 and C-11' positions of phytoene with a concomitant isomerization of two neighboring double bonds at the C9 and C9' positions from trans to cis. The polypeptide is 15-cis-phytoene desaturase, chloroplastic/chromoplastic (PDS) (Capsicum annuum (Capsicum pepper)).